The chain runs to 561 residues: Potassium-transporting ATPase potassium-binding subunit (561 aa).

12 helical membrane-spanning segments follow: residues M1–R21, Y62–M82, G132–M152, I173–G193, F253–V273, L283–V303, F327–V347, A356–V376, G379–G399, M416–M436, M483–I503, and L526–A546.

Belongs to the KdpA family. As to quaternary structure, the system is composed of three essential subunits: KdpA, KdpB and KdpC.

The protein resides in the cell inner membrane. In terms of biological role, part of the high-affinity ATP-driven potassium transport (or Kdp) system, which catalyzes the hydrolysis of ATP coupled with the electrogenic transport of potassium into the cytoplasm. This subunit binds the periplasmic potassium ions and delivers the ions to the membrane domain of KdpB through an intramembrane tunnel. This Erwinia tasmaniensis (strain DSM 17950 / CFBP 7177 / CIP 109463 / NCPPB 4357 / Et1/99) protein is Potassium-transporting ATPase potassium-binding subunit.